The primary structure comprises 383 residues: GTP-binding protein 10 homolog (383 aa).

Residues 22–157 (PTFLDTLRLA…RTVNLDLKLI (136 aa)) enclose the Obg domain. Residues 158–353 (ADVGLVGFPN…VKSQLRRTLV (196 aa)) form the OBG-type G domain. GTP contacts are provided by residues 164-171 (GFPNAGKS), 211-215 (DLPGL), and 287-290 (NKMD).

It belongs to the TRAFAC class OBG-HflX-like GTPase superfamily. OBG GTPase family.

It is found in the nucleus. The protein resides in the nucleolus. Its function is as follows. May be involved in the ribosome maturation process. This Drosophila melanogaster (Fruit fly) protein is GTP-binding protein 10 homolog.